The chain runs to 332 residues: Cell division protein ZipA (332 aa).

Over 1–6 (MMQDLR) the chain is Periplasmic. The chain crosses the membrane as a helical span at residues 7–27 (LILIVVGAIAIIALLLHGLWT). At 28–332 (SRKERSSLFR…RLREVLENNA (305 aa)) the chain is on the cytoplasmic side. Basic and acidic residues-rich tracts occupy residues 34-51 (SLFR…REQS) and 61-72 (GEVRVRSAHPED). A disordered region spans residues 34-184 (SLFRDRPAKR…PAVAHEPQPA (151 aa)). The segment covering 98–107 (PAPRAVQPAA) has biased composition (low complexity). Residues 121–136 (DDILLDNYAQEEDDEP) are compositionally biased toward acidic residues. Residues 155 to 171 (PAAEPAFHAEPAHQPQP) are compositionally biased toward low complexity.

It belongs to the ZipA family. Interacts with FtsZ via their C-terminal domains.

The protein resides in the cell inner membrane. Essential cell division protein that stabilizes the FtsZ protofilaments by cross-linking them and that serves as a cytoplasmic membrane anchor for the Z ring. Also required for the recruitment to the septal ring of downstream cell division proteins. In Serratia proteamaculans (strain 568), this protein is Cell division protein ZipA.